The sequence spans 712 residues: Lactoperoxidase (712 aa).

Positions M1 to A26 are cleaved as a signal peptide. Residues Q27–R80 constitute a propeptide that is removed on maturation. N-linked (GlcNAc...) asparagine glycosylation occurs at N106. A disulfide bridge connects residues C132 and C145. N-linked (GlcNAc...) asparagine glycosylation occurs at N212. Residue D225 participates in heme b binding. Catalysis depends on H226, which acts as the Proton acceptor. Ca(2+) is bound at residue D227. Cystine bridges form between C246–C256 and C250–C274. Residues T301, F303, D305, and S307 each coordinate Ca(2+). S315 carries the phosphoserine modification. Residues N322 and N358 are each glycosylated (N-linked (GlcNAc...) asparagine). Residues C354 and C365 are joined by a disulfide bond. The heme b site is built by E375 and H468. Residue Y482 is modified to 3'-nitrotyrosine. 2 disulfides stabilise this stretch: C573–C630 and C671–C696.

Belongs to the peroxidase family. XPO subfamily. Ca(2+) is required as a cofactor. The cofactor is heme b. As to expression, mammary gland, milk and salivary gland. Found in bronchial submucosal glands.

Its subcellular location is the secreted. It is found in the cytoplasm. The catalysed reaction is 2 a phenolic donor + H2O2 = 2 a phenolic radical donor + 2 H2O. The enzyme catalyses thiocyanate + H2O2 + H(+) = hypothiocyanous acid + H2O. It carries out the reaction iodide + H2O2 = hypoiodite + H2O. Its function is as follows. Heme-containing oxidoreductase which catalyzes the conversion of thiocyanate (SCN(-)) into antimicrobial agent hypothiocyanous acid (OSCN(-)) in the presence of hydrogen peroxide (H2O2). Also involved in the conversion of iodide (I(-)) into hypoiodite (IO(-)) in the presence of H2O2. Responsible for the inactivation of a wide range of micro-organisms and hence, important component of defense mechanism. Shows antibacterial properties against Pseudomonas aeruginosa. The lactoperoxidase-SCN(-)-H2O2 system shows antibacterial properties against Burkholderia cepacia and Haemophilus influenzae in vitro. Present in mammary and salivary gland secretions and may contribute to airway host defense against infection. May contribute to maintaining an appropriate H2O2 cellular level, therefore protecting cells from H2O2-caused injuries and inflammation. The sequence is that of Lactoperoxidase from Homo sapiens (Human).